Here is a 235-residue protein sequence, read N- to C-terminus: Secretory carrier-associated membrane protein 5B (235 aa).

Residues 1 to 39 (MSDKPNNFPPLPRFIPLKPCFYQDFDTDIPDVHRTTAKR) are Cytoplasmic-facing. A helical transmembrane segment spans residues 40-60 (LYYLWMLNSITLGVNLIGCLA). At 61 to 67 (WLIGGGG) the chain is on the extracellular side. The chain crosses the membrane as a helical span at residues 68–88 (ATNFGLAFLWLILFTPCSYVC). At 89-102 (WFRPIYKAFKTDSS) the chain is on the cytoplasmic side. A helical transmembrane segment spans residues 103 to 125 (FNFMAFFFTFTGQLVISIIQAVG). Residues 126–148 (IPGWGVCGWIASISFFGTNVGSA) are Extracellular-facing. The chain crosses the membrane as a helical span at residues 149–169 (VVMLIPTIMFTAVAVLSFVAL). Residues 170–235 (TKVHRFYRGA…TPNYGYSNQM (66 aa)) are Cytoplasmic-facing.

This sequence belongs to the SCAMP family. SCAMP5 subfamily.

It localises to the cell membrane. The protein localises to the golgi apparatus membrane. Its subcellular location is the golgi apparatus. The protein resides in the trans-Golgi network membrane. It is found in the recycling endosome membrane. It localises to the cytoplasmic vesicle. The protein localises to the secretory vesicle. Its subcellular location is the synaptic vesicle membrane. Functionally, required for the calcium-dependent exocytosis of signal sequence-containing cytokines. Probably acts in cooperation with the SNARE machinery. This chain is Secretory carrier-associated membrane protein 5B (scamp5-b), found in Xenopus laevis (African clawed frog).